A 549-amino-acid chain; its full sequence is Cytoplasmic trehalase (549 aa).

Substrate-binding positions include arginine 168, 175–176 (WD), asparagine 212, 221–223 (RSQ), 292–294 (RDE), and glycine 324. Catalysis depends on proton donor/acceptor residues aspartate 326 and glutamate 509. Glutamate 525 contacts substrate.

The protein belongs to the glycosyl hydrolase 37 family. In terms of assembly, monomer.

The protein localises to the cytoplasm. It catalyses the reaction alpha,alpha-trehalose + H2O = alpha-D-glucose + beta-D-glucose. Its pathway is glycan degradation; trehalose degradation; D-glucose from alpha,alpha-trehalose: step 1/1. Hydrolyzes trehalose to glucose. Could be involved, in cells returning to low osmolarity conditions, in the utilization of the accumulated cytoplasmic trehalose, which was synthesized in response to high osmolarity. The sequence is that of Cytoplasmic trehalase from Escherichia coli O127:H6 (strain E2348/69 / EPEC).